A 612-amino-acid polypeptide reads, in one-letter code: UvrABC system protein C (612 aa).

The GIY-YIG domain maps to 21–99 (KLPGVYQMYD…IKSQKPPFNI (79 aa)). Positions 209–244 (EVLQQELQVEMEQASQALDFERAVVVRDQITDLRQV) constitute a UVR domain.

Belongs to the UvrC family. Interacts with UvrB in an incision complex.

It localises to the cytoplasm. Functionally, the UvrABC repair system catalyzes the recognition and processing of DNA lesions. UvrC both incises the 5' and 3' sides of the lesion. The N-terminal half is responsible for the 3' incision and the C-terminal half is responsible for the 5' incision. This is UvrABC system protein C from Saccharophagus degradans (strain 2-40 / ATCC 43961 / DSM 17024).